Consider the following 276-residue polypeptide: MKVIKTLSIINFFIFVTFNIKNESKYSNTFINNAYNMSIRRSMAESNPSTGAGGSGSAGGSGSAGGSGSAGGSGSAGGSGSAGSGDGNGANPGADAERSPSTPATTTTTTTTNDAEASTSTSSENPNHNNAETNPKGKGEVQKPNQANKETQNNSNVQQDSQTKSNVPPTQDADTKSPTAQPEQAENSAPIAEQTESPELQSAPENKGTGQHGHMHGSRNNHPQNTSDSQKECTDGNKENCGAAPSLLSNSSNIASINKFVVLISATLVLSFAIFI.

The first 20 residues, 1 to 20, serve as a signal peptide directing secretion; it reads MKVIKTLSIINFFIFVTFNI. 2 N-linked (GlcNAc...) asparagine glycosylation sites follow: asparagine 22 and asparagine 36. The polymorphic region stretch occupies residues 44 to 202; it reads AESNPSTGAG…EQTESPELQS (159 aa). The disordered stretch occupies residues 44 to 242; that stretch reads AESNPSTGAG…CTDGNKENCG (199 aa). Residues 51-90 are compositionally biased toward gly residues; that stretch reads GAGGSGSAGGSGSAGGSGSAGGSGSAGGSGSAGSGDGNGA. Repeat copies occupy residues 53–58, 59–64, 65–70, 71–76, and 77–82. The interval 53–82 is 5 X 6 AA tandem repeats of G-G-S-G-S-A; the sequence is GGSGSAGGSGSAGGSGSAGGSGSAGGSGSA. Positions 91–127 are enriched in low complexity; the sequence is NPGADAERSPSTPATTTTTTTTNDAEASTSTSSENPN. Polar residues-rich tracts occupy residues 143-169, 176-187, and 194-204; these read KPNQ…NVPP, KSPTAQPEQAEN, and QTESPELQSAP. A glycan (N-linked (GlcNAc...) asparagine) is linked at asparagine 153. A glycan (N-linked (GlcNAc...) asparagine) is linked at asparagine 225. Residues 229–238 show a composition bias toward basic and acidic residues; sequence SQKECTDGNK. A disulfide bridge connects residues cysteine 233 and cysteine 241. Asparagine 250 is a glycosylation site (N-linked (GlcNAc...) asparagine). Asparagine 250 is lipidated: GPI-anchor amidated asparagine. Residues 251-276 constitute a propeptide, removed in mature form; the sequence is SSNIASINKFVVLISATLVLSFAIFI.

Its subcellular location is the cell membrane. May play a role in the merozoite attachment to the erythrocyte. This Plasmodium falciparum (isolate 7G8) protein is Merozoite surface protein 2.